The primary structure comprises 218 residues: Thiopurine S-methyltransferase (218 aa).

Tryptophan 10, leucine 45, glutamate 66, and arginine 123 together coordinate S-adenosyl-L-methionine.

It belongs to the class I-like SAM-binding methyltransferase superfamily. TPMT family.

The protein localises to the cytoplasm. The enzyme catalyses S-adenosyl-L-methionine + a thiopurine = S-adenosyl-L-homocysteine + a thiopurine S-methylether.. In Shewanella denitrificans (strain OS217 / ATCC BAA-1090 / DSM 15013), this protein is Thiopurine S-methyltransferase.